The sequence spans 98 residues: MTSINLNLTMAFSLALTGVLVYRSHLMSTLLCLEGMMLSLFILMALLISHSHMFSVSMAPLILLVFSACEAGVGLALLVKISTNYGNDYVQNLNLLQC.

Helical transmembrane passes span 1-21 (MTSI…GVLV), 28-48 (STLL…ALLI), and 59-79 (APLI…ALLV).

This sequence belongs to the complex I subunit 4L family. As to quaternary structure, core subunit of respiratory chain NADH dehydrogenase (Complex I) which is composed of 45 different subunits.

It localises to the mitochondrion inner membrane. The catalysed reaction is a ubiquinone + NADH + 5 H(+)(in) = a ubiquinol + NAD(+) + 4 H(+)(out). In terms of biological role, core subunit of the mitochondrial membrane respiratory chain NADH dehydrogenase (Complex I) which catalyzes electron transfer from NADH through the respiratory chain, using ubiquinone as an electron acceptor. Part of the enzyme membrane arm which is embedded in the lipid bilayer and involved in proton translocation. This chain is NADH-ubiquinone oxidoreductase chain 4L (MT-ND4L), found in Dactylopsila trivirgata (Striped possum).